The sequence spans 167 residues: Leptin (167 aa).

Residues M1–A21 form the signal peptide. Cysteines 117 and 167 form a disulfide.

Belongs to the leptin family.

The protein localises to the secreted. Key player in the regulation of energy balance and body weight control. Once released into the circulation, has central and peripheral effects by binding LEPR, found in many tissues, which results in the activation of several major signaling pathways. In the hypothalamus, acts as an appetite-regulating factor that induces a decrease in food intake and an increase in energy consumption by inducing anorexinogenic factors and suppressing orexigenic neuropeptides, also regulates bone mass and secretion of hypothalamo-pituitary-adrenal hormones. In the periphery, increases basal metabolism, influences reproductive function, regulates pancreatic beta-cell function and insulin secretion, is pro-angiogenic for endothelial cell and affects innate and adaptive immunity. In the arcuate nucleus of the hypothalamus, activates by depolarization POMC neurons inducing FOS and SOCS3 expression to release anorexigenic peptides and inhibits by hyperpolarization NPY neurons inducing SOCS3 with a consequent reduction on release of orexigenic peptides. In addition to its known satiety inducing effect, has a modulatory role in nutrient absorption. In the intestine, reduces glucose absorption by enterocytes by activating PKC and leading to a sequential activation of p38, PI3K and ERK signaling pathways which exerts an inhibitory effect on glucose absorption. Acts as a growth factor on certain tissues, through the activation of different signaling pathways increases expression of genes involved in cell cycle regulation such as CCND1, via JAK2-STAT3 pathway, or VEGFA, via MAPK1/3 and PI3K-AKT1 pathways. May also play an apoptotic role via JAK2-STAT3 pathway and up-regulation of BIRC5 expression. Pro-angiogenic, has mitogenic activity on vascular endothelial cells and plays a role in matrix remodeling by regulating the expression of matrix metalloproteinases (MMPs) and tissue inhibitors of metalloproteinases (TIMPs). In innate immunity, modulates the activity and function of neutrophils by increasing chemotaxis and the secretion of oxygen radicals. Increases phagocytosis by macrophages and enhances secretion of pro-inflammatory mediators. Increases cytotoxic ability of NK cells. Plays a pro-inflammatory role, in synergy with IL1B, by inducing NOS2 which promotes the production of IL6, IL8 and Prostaglandin E2, through a signaling pathway that involves JAK2, PI3K, MAP2K1/MEK1 and MAPK14/p38. In adaptive immunity, promotes the switch of memory T-cells towards T helper-1 cell immune responses. Increases CD4(+)CD25(-) T-cell proliferation and reduces autophagy during TCR (T-cell receptor) stimulation, through MTOR signaling pathway activation and BCL2 up-regulation. The sequence is that of Leptin (Lep) from Rattus norvegicus (Rat).